We begin with the raw amino-acid sequence, 125 residues long: MINIALVATGGAIGSVFRYLVGVWSMRLAGPNFPWGTLAVNIVGSFLIGLLVELVARRLNASIEMRLFLVTGVLGGFTTFSSFSLDAVSLFERGALGLSAFYILASLVVSIAAVFAGLALGRNLF.

4 helical membrane passes run 4 to 24, 35 to 55, 68 to 88, and 100 to 120; these read IALV…VGVW, WGTL…VELV, FLVT…LDAV, and AFYI…GLAL. Na(+) is bound by residues Gly75 and Thr78.

The protein belongs to the fluoride channel Fluc/FEX (TC 1.A.43) family.

Its subcellular location is the cell inner membrane. It catalyses the reaction fluoride(in) = fluoride(out). With respect to regulation, na(+) is not transported, but it plays an essential structural role and its presence is essential for fluoride channel function. Its function is as follows. Fluoride-specific ion channel. Important for reducing fluoride concentration in the cell, thus reducing its toxicity. The polypeptide is Fluoride-specific ion channel FluC (Agrobacterium fabrum (strain C58 / ATCC 33970) (Agrobacterium tumefaciens (strain C58))).